Here is a 66-residue protein sequence, read N- to C-terminus: uncharacterized protein (66 aa).

Residues 5–59 form the HTH cro/C1-type domain; the sequence is LKYYRALHNLTQEDLAKKLGVSRQTIIAIEKGKYDPSLKLAFKIAKFFGVKIEDI. Positions 16-35 form a DNA-binding region, H-T-H motif; it reads QEDLAKKLGVSRQTIIAIEK.

This is an uncharacterized protein from Methanocaldococcus jannaschii (strain ATCC 43067 / DSM 2661 / JAL-1 / JCM 10045 / NBRC 100440) (Methanococcus jannaschii).